Consider the following 589-residue polypeptide: DNA mismatch repair protein MutL (589 aa).

Disordered stretches follow at residues 330–355 and 374–394; these read LQRR…SHRE and RIYE…SEPT. Residues 331-341 are compositionally biased toward basic and acidic residues; it reads QRREAPQRPEP. Residues 381-390 are compositionally biased toward pro residues; sequence PYRPPEPPAA.

It belongs to the DNA mismatch repair MutL/HexB family.

This protein is involved in the repair of mismatches in DNA. It is required for dam-dependent methyl-directed DNA mismatch repair. May act as a 'molecular matchmaker', a protein that promotes the formation of a stable complex between two or more DNA-binding proteins in an ATP-dependent manner without itself being part of a final effector complex. This is DNA mismatch repair protein MutL from Trichlorobacter lovleyi (strain ATCC BAA-1151 / DSM 17278 / SZ) (Geobacter lovleyi).